The primary structure comprises 381 residues: Adaptive-response sensory kinase SasA (381 aa).

One can recognise a Histidine kinase domain in the interval 154 to 367; sequence MVAHELRTPL…CFYFTVPVWD (214 aa). Histidine 157 carries the post-translational modification Phosphohistidine; by autocatalysis.

Homooligomerizes. Interacts with KaiC. Participates in the KaiBC complex, whose core is composed of a KaiC homohexamer and 6 KaiB.

It carries out the reaction ATP + protein L-histidine = ADP + protein N-phospho-L-histidine.. Member of the two-component regulatory system SasA/RpaA involved in genome-wide circadian gene expression. One of several clock output pathways. Participates in the Kai clock protein complex, the main circadian regulator in cyanobacteria, via its interaction with KaiC. KaiC enhances the autophosphorylation activity of SasA, which then transfers its phosphate group to RpaA to activate it. In addition to its output function, recruits fold-shifted KaiB (KaiB(fs)) to KaiC to cooperatively form the KaiB(6):KaiC(6) complex (independent of SasA kinase activity). Required for robustness of the circadian rhythm of gene expression and is involved in clock output, also required for adaptation to light/dark cycles. The sequence is that of Adaptive-response sensory kinase SasA from Prochlorococcus marinus (strain SARG / CCMP1375 / SS120).